The following is a 118-amino-acid chain: Diacylglycerol kinase (118 aa).

Position 28 (Glu28) interacts with a divalent metal cation. Transmembrane regions (helical) follow at residues 29–49 (TAFR…FFLG) and 55–75 (IILM…NSAV). The active-site Proton acceptor is Glu69. Glu76 provides a ligand contact to a divalent metal cation. A helical transmembrane segment spans residues 98–118 (SASVFIALCIVGIVWGGILFF).

The protein belongs to the bacterial diacylglycerol kinase family. Requires Mg(2+) as cofactor.

It is found in the cell inner membrane. It catalyses the reaction a 1,2-diacyl-sn-glycerol + ATP = a 1,2-diacyl-sn-glycero-3-phosphate + ADP + H(+). Catalyzes the ATP-dependent phosphorylation of sn-l,2-diacylglycerol (DAG) to phosphatidic acid. Involved in the recycling of diacylglycerol produced as a by-product during membrane-derived oligosaccharide (MDO) biosynthesis. This chain is Diacylglycerol kinase (dgkA), found in Haemophilus influenzae (strain ATCC 51907 / DSM 11121 / KW20 / Rd).